The sequence spans 68 residues: Large ribosomal subunit protein bL33c (68 aa).

This sequence belongs to the bacterial ribosomal protein bL33 family.

The protein resides in the plastid. Its subcellular location is the chloroplast. The chain is Large ribosomal subunit protein bL33c from Amborella trichopoda.